The sequence spans 1466 residues: Retrovirus-related Pol polyprotein from transposon RE1 (1466 aa).

Residues 227 to 270 (SHRNTTTTNNNNNGNRNNRYDNRNNNNNSKPWQQSSTNFHPNNN) form a disordered region. Positions 229-254 (RNTTTTNNNNNGNRNNRYDNRNNNNN) are enriched in low complexity. Over residues 255–270 (SKPWQQSSTNFHPNNN) the composition is skewed to polar residues. The CCHC-type zinc finger occupies 278-294 (KCQICGVQGHSAKRCSQ). Asp334 (for protease activity) is an active-site residue. The Integrase catalytic domain occupies 519-682 (NSTRPLEYIY…SPFQKLFGTS (164 aa)). Asp530 and Asp592 together coordinate Mg(2+). The segment at 772 to 927 (WSPHTTLPTR…NNNQAPLNTH (156 aa)) is disordered. 2 stretches are compositionally biased toward low complexity: residues 796–827 (AATPPSSPSAPFRNSQVSSSNLDSSFSSSFPS) and 836–898 (QNGP…SSTS). Positions 899 to 912 (PTPPSILIHPPPPL) are enriched in pro residues. Over residues 915–927 (IVNNNNQAPLNTH) the composition is skewed to polar residues. One can recognise a Reverse transcriptase Ty1/copia-type domain in the interval 982–1225 (NHTWDLVPPP…ITAKPVTTPM (244 aa)).

It carries out the reaction DNA(n) + a 2'-deoxyribonucleoside 5'-triphosphate = DNA(n+1) + diphosphate. In Arabidopsis thaliana (Mouse-ear cress), this protein is Retrovirus-related Pol polyprotein from transposon RE1 (RE1).